A 133-amino-acid chain; its full sequence is UPF0225 protein BB3385 (133 aa).

This sequence belongs to the UPF0225 family.

In Bordetella bronchiseptica (strain ATCC BAA-588 / NCTC 13252 / RB50) (Alcaligenes bronchisepticus), this protein is UPF0225 protein BB3385.